Consider the following 548-residue polypeptide: MAAKEVKFGNTARQKMLKGVNILADSVKVTLGPKGRNVVLDKSYGSPVITKDGVSVAKEIELEDKFENMGAQMVKEVASKANDEAGDGTTTATVLAQAIVNEGLKSVAAGMNPMDLKRGIDKAVIAAVEELKKISQPCADSKAIAQVATISANADHTIGEIIAQAMDKVGQEGVITVEEGQALTDELDVVEGMQFDRGYLSPYFINNQESGSVELDNPFILLIDKKISNIRELLPVLEGVSKAGKPLLIIAEDVEGEALATLVVNNMRGIVKVAAVKAPGFGDRRKAMLQDIAVLTGGTVVSEEIGMELEKTQLEDLGTAKRVVITKDNTTVVDGNGDDTAIDGRVNQIKQQMEDTTSDYDREKLQERLAKLAGGVAVIKVGAATEMEMKEKKARVEDALHATRAAVEEGVVPGGGVALVRAASKLAELRGDNEEQNVGIRLALRAMEAPLRQIAMNAGAEGSVVANNVRAGEGNYGYNAGNDTYGDMLEMGILDPTKVTRSALQFAASVGALMITTEAMIADIPQDDNAGGMPGGDMGGMGGMGGMM.

ATP is bound by residues 30-33 (TLGP), Lys-51, 87-91 (DGTTT), Gly-415, and Asp-495.

The protein belongs to the chaperonin (HSP60) family. In terms of assembly, forms a cylinder of 14 subunits composed of two heptameric rings stacked back-to-back. Interacts with the co-chaperonin GroES.

Its subcellular location is the cytoplasm. It carries out the reaction ATP + H2O + a folded polypeptide = ADP + phosphate + an unfolded polypeptide.. In terms of biological role, together with its co-chaperonin GroES, plays an essential role in assisting protein folding. The GroEL-GroES system forms a nano-cage that allows encapsulation of the non-native substrate proteins and provides a physical environment optimized to promote and accelerate protein folding. This Idiomarina loihiensis (strain ATCC BAA-735 / DSM 15497 / L2-TR) protein is Chaperonin GroEL.